The chain runs to 271 residues: Neurexophilin-1 (271 aa).

Residues Met-1 to Cys-21 form the signal peptide. The segment at Ala-22–Leu-97 is II. N-linked (GlcNAc...) asparagine glycans are attached at residues Asn-23, Asn-68, Asn-93, Asn-146, Asn-156, and Asn-162. Residues Gln-98–Phe-176 are III. The tract at residues Asp-177–Asp-185 is IV (linker domain). The tract at residues Ala-186–Gly-271 is v (Cys-rich).

The protein belongs to the neurexophilin family. In terms of processing, may be proteolytically processed at the boundary between the N-terminal non-conserved and the central conserved domain in neuron-like cells. In terms of tissue distribution, highest level in brain.

The protein localises to the secreted. Its function is as follows. May be signaling molecules that resemble neuropeptides. Ligand for alpha-neurexins. This chain is Neurexophilin-1 (Nxph1), found in Rattus norvegicus (Rat).